Reading from the N-terminus, the 385-residue chain is MAEAGVAAASLFGADRRLCSADILPPAEVRARIEVAVLNFLAALTDPAAPAISALPLISRGAANRGLRRALLRDDVSSVYLSYASCKRSLTRANDAKAFVRVWKVMEMCYKILGEGKLVTLRELFYTLLSESPTYFTCQRHVNQTVQDVVSLLRCTRQSLGIMASSRGALIGRLVVQGPEEEHVDCSILGPSGHAITGDLNVLSKLIFSSDARYIIVVEKDAIFQRLAEDRIYSHLPCILITAKGYPDLATRFILHRLSQTYPNMPIFALVDWNPAGLAILCTYKYGSISMGLESYRYACNVKWLGLRGDDLQLIPQSAYQELKPRDLQIAKSLLSSKFLQDKHRAELTLMLETGKRAEIEALYSHGFDFLGKYVARKIVQGDYI.

Positions 24–169 (LPPAEVRARI…LGIMASSRGA (146 aa)) constitute a Topo IIA-type catalytic domain. The active-site O-(5'-phospho-DNA)-tyrosine intermediate is the Tyr126. Mg(2+) contacts are provided by Glu219 and Asp272.

This sequence belongs to the TOP6A family. Interacts with TOP6B. Requires Mg(2+) as cofactor.

Its subcellular location is the nucleus. The catalysed reaction is ATP-dependent breakage, passage and rejoining of double-stranded DNA.. Functionally, required for meiotic recombination. Mediates DNA cleavage that forms the double-strand breaks (DSB) that initiate meiotic recombination. This Oryza sativa subsp. japonica (Rice) protein is Meiotic recombination protein SPO11-2 (SPO11-2).